We begin with the raw amino-acid sequence, 166 residues long: Large ribosomal subunit protein uL10 (166 aa).

Belongs to the universal ribosomal protein uL10 family. As to quaternary structure, part of the ribosomal stalk of the 50S ribosomal subunit. The N-terminus interacts with L11 and the large rRNA to form the base of the stalk. The C-terminus forms an elongated spine to which L12 dimers bind in a sequential fashion forming a multimeric L10(L12)X complex.

In terms of biological role, forms part of the ribosomal stalk, playing a central role in the interaction of the ribosome with GTP-bound translation factors. This Streptococcus agalactiae serotype III (strain NEM316) protein is Large ribosomal subunit protein uL10.